The sequence spans 385 residues: Tryptophan--tRNA ligase (385 aa).

A 'HIGH' region motif is present at residues 82–90 (PSGPMHIGH). Residues 253-257 (KMSAS) carry the 'KMSKS' region motif.

This sequence belongs to the class-I aminoacyl-tRNA synthetase family.

It localises to the cytoplasm. The enzyme catalyses tRNA(Trp) + L-tryptophan + ATP = L-tryptophyl-tRNA(Trp) + AMP + diphosphate + H(+). This Pyrococcus abyssi (strain GE5 / Orsay) protein is Tryptophan--tRNA ligase.